The primary structure comprises 175 residues: Cuticle protein CP1876 (175 aa).

Calcified shell.

This is Cuticle protein CP1876 from Cancer pagurus (Rock crab).